The chain runs to 769 residues: Serine protease HtrA-like (769 aa).

Basic residues predominate over residues 1 to 20; the sequence is MDIGKKHVIPKSQYRRKRRE. The segment at 1 to 390 is disordered; the sequence is MDIGKKHVIP…ATSKLNKGRA (390 aa). Basic and acidic residues-rich tracts occupy residues 21–64 and 71–108; these read FFHN…ERFK and LEQRNRDVNENKAEESKSNQDSKSAYNRDHYLTDDVSK. Polar residues predominate over residues 126–137; that stretch reads YEQNSEATLSTK. Positions 138 to 186 are enriched in basic and acidic residues; it reads STDKVESSDMRKLSPDKNKVGHEEQHVLSKPSEHDKETRIDFESSRTDS. Composition is skewed to polar residues over residues 202 to 221 and 247 to 262; these read GNESSNLKSEVISDKSNTVP and QQSQNEQTKTYTYGDS. Residues 264 to 295 show a composition bias toward basic and acidic residues; it reads QNDKSNHENDLSHHTPSKSDDKDNVMREDHIV. Positions 298–308 are enriched in polar residues; it reads NPDNDINTPSL. A compositionally biased stretch (basic and acidic residues) spans 310–330; the sequence is KIDDDRKLDEKIHVEDKHKQN. Residues 331 to 347 are compositionally biased toward polar residues; that stretch reads ADSSETVGYQSQSSVSH. Residues 348–362 are compositionally biased toward basic and acidic residues; sequence RSTEKRNMAINDHHK. Over residues 366–390 the composition is skewed to polar residues; sequence QKLNTKTSANNNQKKATSKLNKGRA. The chain crosses the membrane as a helical span at residues 410-430; sequence LVILMGIIILIVILNAIFNNV. Catalysis depends on charge relay system residues His504, Asp534, and Ser619. A PDZ domain is found at 680-733; the sequence is IASLNSFERQAVKLPGKVKNGVVVDQVDNNGLADQSSLKKGDVITELDGKLLED.

It belongs to the peptidase S1C family.

The protein resides in the cell membrane. This is Serine protease HtrA-like from Staphylococcus aureus (strain bovine RF122 / ET3-1).